A 181-amino-acid polypeptide reads, in one-letter code: Adenine phosphoribosyltransferase (181 aa).

It belongs to the purine/pyrimidine phosphoribosyltransferase family. As to quaternary structure, homodimer.

It is found in the cytoplasm. It catalyses the reaction AMP + diphosphate = 5-phospho-alpha-D-ribose 1-diphosphate + adenine. It participates in purine metabolism; AMP biosynthesis via salvage pathway; AMP from adenine: step 1/1. Functionally, catalyzes a salvage reaction resulting in the formation of AMP, that is energically less costly than de novo synthesis. This chain is Adenine phosphoribosyltransferase, found in Brucella anthropi (strain ATCC 49188 / DSM 6882 / CCUG 24695 / JCM 21032 / LMG 3331 / NBRC 15819 / NCTC 12168 / Alc 37) (Ochrobactrum anthropi).